A 1462-amino-acid polypeptide reads, in one-letter code: Trifunctional nucleotide phosphoesterase protein YfkN (1462 aa).

Positions 1–35 are cleaved as a signal peptide; it reads MRIQKRRTHVENILRILLPPIMILSLILPTPPIHA. A 2',3'-cyclic nucleotide 2'-phosphodiesterase/3'-nucleotidase region spans residues 36–623; that stretch reads EESAAPQVHL…GTNLTFESSL (588 aa). A divalent metal cation is bound by residues D52, H54, D97, N141, H249, H282, and H284. A ribonucleoside 3'-phosphate contacts are provided by residues Y458 and 561-567; that span reads YRASGGG. Positions 624–1427 are 5'-nucleotidase; sequence LAKPFADKAD…GPAGGLLPDT (804 aa). Positions 676, 678, 708, 740, 872, 895, and 897 each coordinate a divalent metal cation. A ribonucleoside 5'-phosphate contacts are provided by residues F1047 and 1127–1133; that span reads FVGAGGD. The interval 1350–1422 is disordered; that stretch reads ILNSGSNNKP…GSGTDGPAGG (73 aa). The span at 1405–1421 shows a compositional bias: gly residues; the sequence is GSGGNGSGGSGTDGPAG. An LPXTG sorting signal motif is present at residues 1424–1428; it reads LPDTA. T1427 is modified (pentaglycyl murein peptidoglycan amidated threonine). A propeptide spans 1428–1462 (removed by sortase); sequence ATSMYSILLAGFLISALGTAMYLHQRRKQNRANQA.

Belongs to the 5'-nucleotidase family. A divalent metal cation serves as cofactor.

Its subcellular location is the secreted. It localises to the cell wall. It catalyses the reaction a nucleoside 2',3'-cyclic phosphate + H2O = a nucleoside 3'-phosphate + H(+). It carries out the reaction a ribonucleoside 3'-phosphate + H2O = a ribonucleoside + phosphate. The enzyme catalyses a ribonucleoside 5'-phosphate + H2O = a ribonucleoside + phosphate. Functionally, catalyzes the release of inorganic phosphate from 2',3'-cyclic nucleotides through consecutive 2',3'-phosphodiesterase and 3'- (or 2') nucleotidase activities. Also possesses a 5'-nucleotidase activity. Does not catalyze the release of inorganic phosphate from 3',5'-cyclic nucleotides. Probably plays a role in the cellular reprocessing of nucleotides present in the medium, under conditions of phosphate shortage. The chain is Trifunctional nucleotide phosphoesterase protein YfkN (yfkN) from Bacillus subtilis (strain 168).